Reading from the N-terminus, the 164-residue chain is PTS system sorbose-specific EIIB component (164 aa).

Residues 1–164 (MIITLARVDD…AKIDEVFGKE (164 aa)) form the PTS EIIB type-4 domain. The active-site Pros-phosphohistidine intermediate is the H14. H14 bears the Phosphohistidine; by EIIA mark.

The protein resides in the cytoplasm. It catalyses the reaction keto-L-sorbose(out) + N(pros)-phospho-L-histidyl-[protein] = L-sorbose 1-phosphate(in) + L-histidyl-[protein]. In terms of biological role, the phosphoenolpyruvate-dependent sugar phosphotransferase system (PTS), a major carbohydrate active transport system, catalyzes the phosphorylation of incoming sugar substrates concomitant with their translocation across the cell membrane. The enzyme II SorABCD PTS system is involved in L-sorbose transport. The polypeptide is PTS system sorbose-specific EIIB component (Lacticaseibacillus casei (Lactobacillus casei)).